A 588-amino-acid chain; its full sequence is MELKNKVSNLPSKPGCYLYLNKDKHVIYVGKAKNLKKRVSSYFDRAQNLKTTRLVREIADLEYFVVSNEKESLLLEENLIKKYRPKYNVLLNDDKAYPYIIITNEKDPTYKYVRKLDKKAFRSFGPLPIGSNARETLITLQRLFPLRRCKGNLGKPCLHYFIGQCSGACFKEVNKEYYQEQIKRVDNFFKGNINEVKTLLTNQMHKAAENLQFEEAQRIKEQIISLDFTTTKQNVEFKSQTDVDVISYFIEDEKIAIVTLFYRSGKLLFKDEHIQLYFEQDITDLIDSFMSQIYDKNILPDKIIVDNEVELFDLNEKYKSISTHPIKEDEKIIYKLATENAQEAIRKSKISTTINIGNENELLLELQEKANLQKEPYRLEMFDISNIGNEFIVGSCVVYINGKPARNEFRKYNIESKFTSDYDRLKEMLYRRFQKALIEKRMLPDLIIMDGGIIQIHAAKEIINALGLSEIQVIGLVKDEHHNTSFLIDTNEEQVIIKDKPKLFNWLSSIQVRVDEYAKSGFRKKQNNSFLKSDLEQIEGLGKKRIQDLFKKFNTINEIESADQEELFKILKNKKALDNLNIYLKNRK.

The 78-residue stretch at 12–89 (SKPGCYLYLN…IKKYRPKYNV (78 aa)) folds into the GIY-YIG domain. The region spanning 194–229 (NEVKTLLTNQMHKAAENLQFEEAQRIKEQIISLDFT) is the UVR domain.

Belongs to the UvrC family. In terms of assembly, interacts with UvrB in an incision complex.

It localises to the cytoplasm. In terms of biological role, the UvrABC repair system catalyzes the recognition and processing of DNA lesions. UvrC both incises the 5' and 3' sides of the lesion. The N-terminal half is responsible for the 3' incision and the C-terminal half is responsible for the 5' incision. The polypeptide is UvrABC system protein C (Mesoplasma florum (strain ATCC 33453 / NBRC 100688 / NCTC 11704 / L1) (Acholeplasma florum)).